Consider the following 521-residue polypeptide: MAAGSGVVPPPLGAGLCTVKVEEDSPGNQESSGSGDWQNPETSRKQFRQLRYQEVAGPEEALSRLWELCRRWLRPELLSKEQIMELLVLEQFLTILPQELQAYVRDHSPESGEEAAALARTLQRALDRASPQGFMTFKDVAESLTWEEWEQLAAARKGFCEESTKDAGSTVVPGLETRTVNTDVILKQEILKEAEPQAWLQEVSQGMVPALTKCGDPSEDWEEKLPKAAVLLQLQGSEEQGRTAIPLLIGVSREERDSKNNESENSGSSVLGQHIQTAEGLGTNSQCGDDHKQGFHVKCHSVKPHSSVDSAVGLLETQRQFQEDKPYKCDSCEKGFRQRSDLFKHQRIHTGEKPYQCQECGKRFSQSAALVKHQRTHTGEKPYACPECGECFRQSSHLSRHQRTHASEKYYKCEECGEIVHVSSLFRHQRLHRGERPYKCGDCEKSFRQRSDLFKHQRTHTGEKPYACVVCGRRFSQSATLIKHQRTHTGEKPYKCFQCGERFRQSTHLVRHQRIHQNSVS.

Residues Met1–Lys45 are disordered. Lys20 participates in a covalent cross-link: Glycyl lysine isopeptide (Lys-Gly) (interchain with G-Cter in SUMO2). The span at Pro26–Glu41 shows a compositional bias: polar residues. The region spanning Gln38–Gly133 is the SCAN box domain. Residues Met135–Pro196 form the KRAB domain. A Glycyl lysine isopeptide (Lys-Gly) (interchain with G-Cter in SUMO2) cross-link involves residue Lys259. 3 consecutive C2H2-type zinc fingers follow at residues Tyr327–His349, Tyr355–His377, and Tyr383–His405. The C2H2-type 4; atypical zinc-finger motif lies at Tyr411 to His432. A Glycyl lysine isopeptide (Lys-Gly) (interchain with G-Cter in SUMO2) cross-link involves residue Lys412. C2H2-type zinc fingers lie at residues Tyr438–His460, Tyr466–His488, and Tyr494–His516.

This sequence belongs to the krueppel C2H2-type zinc-finger protein family. In terms of tissue distribution, expressed at high level in testis.

It is found in the nucleus. May be involved in transcriptional regulation. The chain is Zinc finger protein 394 (Znf394) from Mus musculus (Mouse).